Reading from the N-terminus, the 90-residue chain is Small cysteine-rich outer membrane protein OmcA (90 aa).

The N-terminal stretch at 1 to 19 (MKKAVLIAAMFCGVVSLSS) is a signal peptide. C20 carries N-palmitoyl cysteine lipidation. A lipid anchor (S-diacylglycerol cysteine) is attached at C20. Residues 69–90 (TECNSQSPQVKGCTSPDGRCKQ) form a disordered region.

As to quaternary structure, part of a disulfide cross-linked outer membrane complex (COMC) composed of the major outer membrane porin (MOMP), the small cysteine-rich protein (OmcA) and the large cysteine-rich periplasmic protein (OmcB).

It localises to the cell outer membrane. Its function is as follows. In elementary bodies (EBs, the infectious stage, which is able to survive outside the host cell) provides the structural integrity of the outer envelope through disulfide cross-links with the large cysteine-rich periplasmic protein and the major outer membrane porin. It has been described in publications as the Sarkosyl-insoluble COMC (Chlamydia outer membrane complex), and serves as the functional equivalent of peptidoglycan. The polypeptide is Small cysteine-rich outer membrane protein OmcA (omcA) (Chlamydia pneumoniae (Chlamydophila pneumoniae)).